The following is a 176-amino-acid chain: Large ribosomal subunit protein uL6 (176 aa).

Belongs to the universal ribosomal protein uL6 family. As to quaternary structure, part of the 50S ribosomal subunit.

Its function is as follows. This protein binds to the 23S rRNA, and is important in its secondary structure. It is located near the subunit interface in the base of the L7/L12 stalk, and near the tRNA binding site of the peptidyltransferase center. In Thiobacillus denitrificans (strain ATCC 25259 / T1), this protein is Large ribosomal subunit protein uL6.